The primary structure comprises 314 residues: Testis-specific Y-encoded protein 4 (314 aa).

It belongs to the nucleosome assembly protein (NAP) family.

It is found in the cytoplasm. The protein localises to the nucleus. Functionally, may be involved in sperm differentiation and proliferation. This chain is Testis-specific Y-encoded protein 4 (TSPY4), found in Homo sapiens (Human).